Consider the following 76-residue polypeptide: RNA-binding protein KhpA (76 aa).

Positions 30 to 76 (GEVLEVRVNPEDLGRVIGRSGRTAKALRTLVTALADGRRVRVDVVDD) constitute a KH domain.

It belongs to the KhpA RNA-binding protein family.

Its subcellular location is the cytoplasm. In terms of biological role, a probable RNA-binding protein. This is RNA-binding protein KhpA from Leifsonia xyli subsp. xyli (strain CTCB07).